The sequence spans 528 residues: ATP synthase subunit alpha (528 aa).

Residue 169–176 (GDRQTGKT) participates in ATP binding.

This sequence belongs to the ATPase alpha/beta chains family. In terms of assembly, F-type ATPases have 2 components, CF(1) - the catalytic core - and CF(0) - the membrane proton channel. CF(1) has five subunits: alpha(3), beta(3), gamma(1), delta(1), epsilon(1). CF(0) has three main subunits: a(1), b(2) and c(9-12). The alpha and beta chains form an alternating ring which encloses part of the gamma chain. CF(1) is attached to CF(0) by a central stalk formed by the gamma and epsilon chains, while a peripheral stalk is formed by the delta and b chains.

It is found in the cell membrane. The enzyme catalyses ATP + H2O + 4 H(+)(in) = ADP + phosphate + 5 H(+)(out). Its function is as follows. Produces ATP from ADP in the presence of a proton gradient across the membrane. The alpha chain is a regulatory subunit. This chain is ATP synthase subunit alpha, found in Mycoplasmopsis agalactiae (strain NCTC 10123 / CIP 59.7 / PG2) (Mycoplasma agalactiae).